The primary structure comprises 145 residues: uncharacterized protein (145 aa).

The protein belongs to the asfivirus K145R family.

It localises to the virion. This is an uncharacterized protein from Ornithodoros (relapsing fever ticks).